Consider the following 450-residue polypeptide: Phosphoglucosamine mutase (450 aa).

The Phosphoserine intermediate role is filled by Ser104. Mg(2+) is bound by residues Ser104, Asp245, Asp247, and Asp249. Ser104 carries the post-translational modification Phosphoserine.

It belongs to the phosphohexose mutase family. Requires Mg(2+) as cofactor. Activated by phosphorylation.

The enzyme catalyses alpha-D-glucosamine 1-phosphate = D-glucosamine 6-phosphate. In terms of biological role, catalyzes the conversion of glucosamine-6-phosphate to glucosamine-1-phosphate. The polypeptide is Phosphoglucosamine mutase (Phenylobacterium zucineum (strain HLK1)).